Reading from the N-terminus, the 300-residue chain is Protoheme IX farnesyltransferase (300 aa).

The next 9 membrane-spanning stretches (helical) occupy residues 20-40, 43-63, 94-114, 116-136, 142-162, 173-193, 215-235, 241-261, and 276-296; these read ITKMRLAISVVFSSVAGYFLG, TIDFVTVTLLAIGGYLMVGAS, PVAFTIASAFTVLGLVVLYVI, PKTAMFGAISIFLYVSIYTPL, LSVFVGAFPGAIPFMLGWVAA, LFMIQFFWQFPHFWAIGWWLF, IQIILYTCWTILVSLIPVFGV, LTPVSGIIIFLLGLGMLYYAI, and MFASVSYITLLQIVYVLDKFI.

The protein belongs to the UbiA prenyltransferase family. Protoheme IX farnesyltransferase subfamily.

It localises to the cell membrane. The catalysed reaction is heme b + (2E,6E)-farnesyl diphosphate + H2O = Fe(II)-heme o + diphosphate. It participates in porphyrin-containing compound metabolism; heme O biosynthesis; heme O from protoheme: step 1/1. Its function is as follows. Converts heme B (protoheme IX) to heme O by substitution of the vinyl group on carbon 2 of heme B porphyrin ring with a hydroxyethyl farnesyl side group. This chain is Protoheme IX farnesyltransferase, found in Christiangramia forsetii (strain DSM 17595 / CGMCC 1.15422 / KT0803) (Gramella forsetii).